The chain runs to 291 residues: Serine/threonine-protein phosphatase Pgam5, mitochondrial (291 aa).

The helical transmembrane segment at Phe-7 to Leu-23 threads the bilayer. The disordered stretch occupies residues Lys-59–Ser-78. The segment covering Asn-67–Asn-77 has biased composition (polar residues).

This sequence belongs to the phosphoglycerate mutase family. BPG-dependent PGAM subfamily. In terms of assembly, interacts with Pk92B/ASK1.

It localises to the mitochondrion outer membrane. It catalyses the reaction O-phospho-L-seryl-[protein] + H2O = L-seryl-[protein] + phosphate. The catalysed reaction is O-phospho-L-threonyl-[protein] + H2O = L-threonyl-[protein] + phosphate. In terms of biological role, displays phosphatase activity for serine/threonine residues, and dephosphorylates and activates Pk92B kinase. Has apparently no phosphoglycerate mutase activity. This chain is Serine/threonine-protein phosphatase Pgam5, mitochondrial, found in Drosophila willistoni (Fruit fly).